The following is a 1039-amino-acid chain: 3',5'-cyclic-AMP phosphodiesterase 4 (1039 aa).

A signal peptide spans 1–29 (MFNNNNNDKINNTMMSNNPSGQIINLESI). N-linked (GlcNAc...) asparagine glycosylation is found at Asn-11, Asn-34, and Asn-37. Over 30 to 201 (DCNSNLSNTT…KKKVNAESLR (172 aa)) the chain is Extracellular. Disordered regions lie at residues 40 to 63 (SIKD…NNIN) and 116 to 181 (IIPN…NNSI). Residues 45–63 (NNNNNNNNNNNNNINNNIN) show a composition bias toward low complexity. 5 N-linked (GlcNAc...) asparagine glycosylation sites follow: Asn-119, Asn-124, Asn-131, Asn-167, and Asn-178. A helical transmembrane segment spans residues 202–222 (GPIIFQNFILYTFFLIVIGTA). Residues 223–226 (EGTS) are Cytoplasmic-facing. The chain crosses the membrane as a helical span at residues 227–247 (WAPEIRVANFVPYCVMCVVLL). Residues 248–256 (EFNRLHKKP) lie on the Extracellular side of the membrane. The helical transmembrane segment at 257–277 (LLRIIFPLYTSNIPFAYMCIF) threads the bilayer. At 278 to 283 (SREARK) the chain is on the cytoplasmic side. A helical membrane pass occupies residues 284-304 (YVLISLLFFASCLCIFLQSGI). Topologically, residues 305 to 310 (PDLRKH) are extracellular. The helical transmembrane segment at 311–331 (IVIFCIIFMINYGCCILFMDW) threads the bilayer. Residues 332–356 (FYIDTTGTKPYRGRILATKIHWGEE) lie on the Cytoplasmic side of the membrane. A helical transmembrane segment spans residues 357 to 377 (ATILVSMALLGCIFIVLEKFI). The Extracellular portion of the chain corresponds to 378–1039 (KSYARCVAEQ…LTQSNYLIVV (662 aa)). Residues 384 to 414 (VAEQHYQIQCLQKEKEKLQTEINISLKKLDL) adopt a coiled-coil conformation. N-linked (GlcNAc...) asparagine glycans are attached at residues Asn-406, Asn-430, Asn-500, and Asn-515. One can recognise a PDEase domain in the interval 533 to 973 (PEITDQGIQE…QQLQQQQQQQ (441 aa)). His-609 serves as the catalytic Proton donor. A divalent metal cation contacts are provided by His-613, His-648, and Asp-649. A disordered region spans residues 738–835 (FPTTTNTQQP…NNSNSNNQNQ (98 aa)). The segment covering 740–835 (TTTNTQQPSS…NNSNSNNQNQ (96 aa)) has biased composition (low complexity). Residues Asn-769, Asn-791, Asn-795, Asn-804, Asn-809, Asn-823, and Asn-826 are each glycosylated (N-linked (GlcNAc...) asparagine). Asp-861 is a binding site for a divalent metal cation. Asn-874, Asn-944, Asn-1018, and Asn-1023 each carry an N-linked (GlcNAc...) asparagine glycan. Residues 978-1019 (QQQQQQLHHHQQQQQFQHQQHQQQLQHQHQQQLNNQNQNQNQ) show a composition bias toward low complexity. A disordered region spans residues 978 to 1033 (QQQQQQLHHHQQQQQFQHQQHQQQLQHQHQQQLNNQNQNQNQSNSNNSNSFGLTQS). Over residues 1020-1033 (SNSNNSNSFGLTQS) the composition is skewed to polar residues.

It belongs to the cyclic nucleotide phosphodiesterase family. The cofactor is a divalent metal cation.

It is found in the cell membrane. It catalyses the reaction 3',5'-cyclic AMP + H2O = AMP + H(+). Its activity is regulated as follows. Inhibited by 3-isobutyl-1-methylxanthine (IBMX). Its function is as follows. Phosphodiesterase specific for extracellular cAMP. Involved in the degradation of extracellular cAMP specifically during multicellular development. The chain is 3',5'-cyclic-AMP phosphodiesterase 4 (Pde4) from Dictyostelium discoideum (Social amoeba).